Consider the following 238-residue polypeptide: Sugar fermentation stimulation protein homolog (238 aa).

It belongs to the SfsA family.

The protein is Sugar fermentation stimulation protein homolog of Haemophilus influenzae (strain 86-028NP).